Consider the following 420-residue polypeptide: POU domain, class 4, transcription factor 1 (420 aa).

The short motif at 57–66 (RAEALAAVDI) is the POU-IV box element. 2 disordered regions span residues 94-117 (STVP…GDLL) and 132-200 (GGAG…XGHL). Basic residues predominate over residues 99–108 (AHHHHHHHHH). 2 stretches are compositionally biased toward gly residues: residues 132 to 165 (GGAG…GPGV) and 172 to 184 (PGGG…GGLL). Positions 261–338 (DSDTDPRELE…ILQAWLEEAE (78 aa)) constitute a POU-specific domain. Positions 356 to 415 (KKRKRTSIAAPEKRSLEAYFAVQPRPSSEKIAAIAEKLDLKKNVVRVWFCNQRQKQKRMK) form a DNA-binding region, homeobox.

This sequence belongs to the POU transcription factor family. Class-4 subfamily. In terms of assembly, interacts (via N-terminus) with RIT2; the interaction controls POU4F1 transactivation activity on some neuronal target genes. Isoform 1 interacts with POU4F2; this interaction inhibits both POU4F1 DNA-binding and transcriptional activities. Isoform 1 interacts (C-terminus) with ESR1 (via DNA-binding domain); this interaction decreases the estrogen receptor ESR1 transcriptional activity in a DNA- and ligand 17-beta-estradiol-independent manner. As to expression, detected in brain, spinal cord and dorsal root ganglion. Isoform 2 is detected in brain, spinal cord, dorsal root ganglion and spleen.

Its subcellular location is the nucleus. It localises to the cytoplasm. Its function is as follows. Multifunctional transcription factor with different regions mediating its different effects. Acts by binding (via its C-terminal domain) to sequences related to the consensus octamer motif 5'-ATGCAAAT-3' in the regulatory regions of its target genes. Regulates the expression of specific genes involved in differentiation and survival within a subset of neuronal lineages. It has been shown that activation of some of these genes requires its N-terminal domain, maybe through a neuronal-specific cofactor. Activates BCL2 expression and protects neuronal cells from apoptosis (via the N-terminal domain). Induces neuronal process outgrowth and the coordinate expression of genes encoding synaptic proteins. Exerts its major developmental effects in somatosensory neurons and in brainstem nuclei involved in motor control. Stimulates the binding affinity of the nuclear estrogene receptor ESR1 to DNA estrogen response element (ERE), and hence modulates ESR1-induced transcriptional activity. May positively regulate POU4F2 and POU4F3. Regulates dorsal root ganglion sensory neuron specification and axonal projection into the spinal cord. Plays a role in TNFSF11-mediated terminal osteoclast differentiation. Negatively regulates its own expression interacting directly with a highly conserved autoregulatory domain surrounding the transcription initiation site. Able to act as transcription factor, cannot regulate the expression of the same subset of genes than isoform 1. Does not have anitapoptotic effect on neuronal cells. The protein is POU domain, class 4, transcription factor 1 (Pou4f1) of Rattus norvegicus (Rat).